Here is a 928-residue protein sequence, read N- to C-terminus: MSRFFANGSDSESESSEEEVPTQFNNKAQNFQFSDDEEEVKRVVRSTKEKRYENLTSIIKTIRNHKKIKDIPNTLSSFEDLTRAYTKALPVISKEENGITPRFYIRCLAELEDFINEVWEDREGRKNLSKNNSKSLGTLRQKVRKYIKDFEDDLARFREAPDQESDVDEGEGDVHDSDADRAGDDSDTGFGVGAKMAELPKAAKSSVQPTKIIADDDDSEDSIDWDPDTESETESSEDENMYQNMRERFLKRTTEKEDKDDDKRKDKRKEQKHKVRKRADDDEDGEGWETVVKGNVVEKPKMFEKDAEIDVPLVLAKLIEIMSARGKKRTDRRLQIDLLFELRDISEQHSLGTAVAIKIHFSIISAIFDYNLKISEPMKLEHWALLLEVMQSMMKLLLANPDINMNESIAEEHEEYATAPFYVRGCPLAAVERLDDEFTKLLKECDPHSNDYVSRLKDEVNVVKTIELVVQYFELSGSNNERCRIYLRKIEHLYYKFDPEVLKRKRGEQQPATGAAGATPAAPVQSSVEVMDKLCKFIYAKDDTDRIRTRAILAHIYHHAMHDNWFQARDLVLMSHLQDNIDAADPSTRILYNRMMANLGLCAFRQENIKDAHHCLVDLMVTGKPKELLAQGLLPQRQHERSAEQEKIEKQRQMPFHMHINLELLECVYLVSAMLLEIPYIAAHEFDARRRMISKTFYQQLRSSERQSLVGPPESMREHVVAAAKAMRCGNWQACANFIVNKKMNTKVWDLFYESERVREMLVKFIKEESLRTYLFTYSNVYTSISIPSLSQMYELPLPKVHSIISKMIINEELMASLDDPSETVVMHRSEPSRLQALAMQFVDKVTNLVDVNEKVFDMKQGNFFQRGNMGNRDRGYNRNQNNQGGNWGGQRRDNRSQRNRNQRGHHKQNQQQNQQQQQQQVHTIDEE.

Disordered regions lie at residues 1–37 and 157–286; these read MSRFFANGSDSESESSEEEVPTQFNNKAQNFQFSDDE and FREA…EDGE. Acidic residues predominate over residues 11–20; the sequence is SESESSEEEV. Positions 22-33 are enriched in polar residues; the sequence is TQFNNKAQNFQF. 4 positions are modified to phosphoserine: Ser34, Ser165, Ser177, and Ser186. Acidic residues predominate over residues 162–171; sequence DQESDVDEGE. Positions 172 to 184 are enriched in basic and acidic residues; it reads GDVHDSDADRAGD. Residues 215–240 are compositionally biased toward acidic residues; it reads DDDDSEDSIDWDPDTESETESSEDEN. Residues 245–264 show a composition bias toward basic and acidic residues; sequence MRERFLKRTTEKEDKDDDKR. A compositionally biased stretch (basic residues) spans 265-277; the sequence is KDKRKEQKHKVRK. Positions 656-832 constitute a PCI domain; sequence FHMHINLELL…ETVVMHRSEP (177 aa). Residues 864–928 form a disordered region; it reads FFQRGNMGNR…QQQVHTIDEE (65 aa). Residues 898–909 show a composition bias toward basic residues; the sequence is QRNRNQRGHHKQ. Positions 910-921 are enriched in low complexity; the sequence is NQQQNQQQQQQQ.

Belongs to the eIF-3 subunit C family. As to quaternary structure, component of the eukaryotic translation initiation factor 3 (eIF-3) complex. The eIF-3 complex interacts with pix.

The protein resides in the cytoplasm. Functionally, component of the eukaryotic translation initiation factor 3 (eIF-3) complex, which is involved in protein synthesis of a specialized repertoire of mRNAs and, together with other initiation factors, stimulates binding of mRNA and methionyl-tRNAi to the 40S ribosome. The eIF-3 complex specifically targets and initiates translation of a subset of mRNAs involved in cell proliferation. This chain is Eukaryotic translation initiation factor 3 subunit C, found in Drosophila grimshawi (Hawaiian fruit fly).